Here is a 287-residue protein sequence, read N- to C-terminus: Ribosomal RNA small subunit methyltransferase I (287 aa).

Belongs to the methyltransferase superfamily. RsmI family.

It is found in the cytoplasm. It carries out the reaction cytidine(1402) in 16S rRNA + S-adenosyl-L-methionine = 2'-O-methylcytidine(1402) in 16S rRNA + S-adenosyl-L-homocysteine + H(+). Its function is as follows. Catalyzes the 2'-O-methylation of the ribose of cytidine 1402 (C1402) in 16S rRNA. This chain is Ribosomal RNA small subunit methyltransferase I, found in Streptococcus pyogenes serotype M3 (strain ATCC BAA-595 / MGAS315).